The primary structure comprises 71 residues: Plasticin-C1 (71 aa).

The N-terminal stretch at 1–22 (MAFLKKSLLLVLFLGLVSLSIC) is a signal peptide. Positions 23–45 (EEEKRENEDEEKQEDDDQSENKR) are excised as a propeptide. A disordered region spans residues 25-46 (EKRENEDEEKQEDDDQSENKRG). Residues 30-40 (EDEEKQEDDDQ) show a composition bias toward acidic residues. Asn68 bears the Asparagine amide mark. The propeptide occupies 70 to 71 (ES).

The protein belongs to the frog skin active peptide (FSAP) family. Plasticin subfamily. In terms of tissue distribution, expressed by the skin glands.

Its subcellular location is the secreted. It is found in the target cell membrane. Its function is as follows. Neutral peptide with no antimicrobial activity. May act in synergy with cationic peptides by enhancing their activity. Has a moderate hemolytic activity. This is Plasticin-C1 from Agalychnis callidryas (Red-eyed tree frog).